The following is a 69-amino-acid chain: DNA-directed RNA polymerase subunit epsilon (69 aa).

It belongs to the RNA polymerase subunit epsilon family. In terms of assembly, RNAP is composed of a core of 2 alpha, a beta and a beta' subunit. The core is associated with a delta subunit, and at least one of epsilon or omega. When a sigma factor is associated with the core the holoenzyme is formed, which can initiate transcription.

The catalysed reaction is RNA(n) + a ribonucleoside 5'-triphosphate = RNA(n+1) + diphosphate. Its function is as follows. A non-essential component of RNA polymerase (RNAP). This chain is DNA-directed RNA polymerase subunit epsilon, found in Halalkalibacterium halodurans (strain ATCC BAA-125 / DSM 18197 / FERM 7344 / JCM 9153 / C-125) (Bacillus halodurans).